Reading from the N-terminus, the 232-residue chain is Leucyl/phenylalanyl-tRNA--protein transferase (232 aa).

The protein belongs to the L/F-transferase family.

The protein resides in the cytoplasm. It catalyses the reaction N-terminal L-lysyl-[protein] + L-leucyl-tRNA(Leu) = N-terminal L-leucyl-L-lysyl-[protein] + tRNA(Leu) + H(+). The catalysed reaction is N-terminal L-arginyl-[protein] + L-leucyl-tRNA(Leu) = N-terminal L-leucyl-L-arginyl-[protein] + tRNA(Leu) + H(+). The enzyme catalyses L-phenylalanyl-tRNA(Phe) + an N-terminal L-alpha-aminoacyl-[protein] = an N-terminal L-phenylalanyl-L-alpha-aminoacyl-[protein] + tRNA(Phe). Functionally, functions in the N-end rule pathway of protein degradation where it conjugates Leu, Phe and, less efficiently, Met from aminoacyl-tRNAs to the N-termini of proteins containing an N-terminal arginine or lysine. The polypeptide is Leucyl/phenylalanyl-tRNA--protein transferase (Nitrosospira multiformis (strain ATCC 25196 / NCIMB 11849 / C 71)).